Consider the following 271-residue polypeptide: Virulence regulon transcriptional activator VirF (271 aa).

The region spanning 167–265 (ERLQKFMEEN…GCTPSQARLT (99 aa)) is the HTH araC/xylS-type domain. 2 consecutive DNA-binding regions (H-T-H motif) follow at residues 184–205 (SKFA…GTVY) and 232–255 (IVDI…RRRF).

Its function is as follows. Transcriptional activator of the Yersinia virulence regulon. This chain is Virulence regulon transcriptional activator VirF (virF), found in Yersinia enterocolitica serotype O:8 / biotype 1B (strain NCTC 13174 / 8081).